The chain runs to 335 residues: Interleukin-12 subunit beta (335 aa).

An N-terminal signal peptide occupies residues 1–22 (MCPQKLTISWFAIVLLVSPLMA). The region spanning 23-106 (MWELEKDVYV…LSHSHLLLHK (84 aa)) is the Ig-like C2-type domain. Residue Asn-47 is glycosylated (N-linked (GlcNAc...) asparagine). Cysteines 50 and 90 form a disulfide. Asn-122, Asn-132, and Asn-220 each carry an N-linked (GlcNAc...) asparagine glycan. Residues 233-324 (PDPPKNLQMK…QDRYYNSSCS (92 aa)) enclose the Fibronectin type-III domain.

The protein belongs to the IL-12B family. In terms of assembly, heterodimer with IL12A; disulfide-linked. The heterodimer is known as interleukin IL-12. Heterodimer with IL23A; disulfide-linked. The heterodimer is known as interleukin IL-23. Also secreted as a monomer. Interacts with NBR1; this interaction promotes IL-12 secretion.

It is found in the secreted. Its function is as follows. Cytokine that can act as a growth factor for activated T and NK cells, enhance the lytic activity of NK/lymphokine-activated killer cells, and stimulate the production of IFN-gamma by resting PBMC. In terms of biological role, associates with IL23A to form the IL-23 interleukin, a heterodimeric cytokine which functions in innate and adaptive immunity. IL-23 may constitute with IL-17 an acute response to infection in peripheral tissues. IL-23 binds to a heterodimeric receptor complex composed of IL12RB1 and IL23R, activates the Jak-Stat signaling cascade, stimulates memory rather than naive T-cells and promotes production of pro-inflammatory cytokines. IL-23 induces autoimmune inflammation and thus may be responsible for autoimmune inflammatory diseases and may be important for tumorigenesis. The polypeptide is Interleukin-12 subunit beta (Il12b) (Mus musculus (Mouse)).